We begin with the raw amino-acid sequence, 338 residues long: Phenylalanine--tRNA ligase alpha subunit (338 aa).

Glu253 is a Mg(2+) binding site.

It belongs to the class-II aminoacyl-tRNA synthetase family. Phe-tRNA synthetase alpha subunit type 1 subfamily. As to quaternary structure, tetramer of two alpha and two beta subunits. Mg(2+) serves as cofactor.

It localises to the cytoplasm. It catalyses the reaction tRNA(Phe) + L-phenylalanine + ATP = L-phenylalanyl-tRNA(Phe) + AMP + diphosphate + H(+). The protein is Phenylalanine--tRNA ligase alpha subunit of Syntrophotalea carbinolica (strain DSM 2380 / NBRC 103641 / GraBd1) (Pelobacter carbinolicus).